A 179-amino-acid polypeptide reads, in one-letter code: Large ribosomal subunit protein uL5 (179 aa).

This sequence belongs to the universal ribosomal protein uL5 family. In terms of assembly, part of the 50S ribosomal subunit; part of the 5S rRNA/L5/L18/L25 subcomplex. Contacts the 5S rRNA and the P site tRNA. Forms a bridge to the 30S subunit in the 70S ribosome.

Functionally, this is one of the proteins that bind and probably mediate the attachment of the 5S RNA into the large ribosomal subunit, where it forms part of the central protuberance. In the 70S ribosome it contacts protein S13 of the 30S subunit (bridge B1b), connecting the 2 subunits; this bridge is implicated in subunit movement. Contacts the P site tRNA; the 5S rRNA and some of its associated proteins might help stabilize positioning of ribosome-bound tRNAs. The protein is Large ribosomal subunit protein uL5 of Agathobacter rectalis (strain ATCC 33656 / DSM 3377 / JCM 17463 / KCTC 5835 / VPI 0990) (Eubacterium rectale).